Reading from the N-terminus, the 196-residue chain is Large ribosomal subunit protein eL15 (196 aa).

The tract at residues 155 to 196 (THRGRAERGLTSAGKKGRGQRRKGKGTEKNYPSVQAHDRRGK) is disordered. Residues 169-178 (KKGRGQRRKG) are compositionally biased toward basic residues.

Belongs to the eukaryotic ribosomal protein eL15 family.

The sequence is that of Large ribosomal subunit protein eL15 from Methanocella arvoryzae (strain DSM 22066 / NBRC 105507 / MRE50).